We begin with the raw amino-acid sequence, 458 residues long: Argininosuccinate lyase (458 aa).

The protein belongs to the lyase 1 family. Argininosuccinate lyase subfamily.

The protein localises to the cytoplasm. It carries out the reaction 2-(N(omega)-L-arginino)succinate = fumarate + L-arginine. It participates in amino-acid biosynthesis; L-arginine biosynthesis; L-arginine from L-ornithine and carbamoyl phosphate: step 3/3. This is Argininosuccinate lyase from Lachnospira eligens (strain ATCC 27750 / DSM 3376 / VPI C15-48 / C15-B4) (Eubacterium eligens).